A 37-amino-acid polypeptide reads, in one-letter code: Large ribosomal subunit protein bL36 (37 aa).

Belongs to the bacterial ribosomal protein bL36 family.

The protein is Large ribosomal subunit protein bL36 of Deinococcus geothermalis (strain DSM 11300 / CIP 105573 / AG-3a).